A 481-amino-acid polypeptide reads, in one-letter code: Hyaluronidase-4 (481 aa).

Over 1–8 the chain is Cytoplasmic; it reads MKVLSEGQ. A helical membrane pass occupies residues 9–29; sequence LKLCVVQPVHLTSWLLIFFIL. The Extracellular segment spans residues 30-453; it reads KSISCLKPAR…ADCREIKTAD (424 aa). Disulfide bonds link C59–C351, C223–C237, C376–C387, C381–C435, and C437–C446. N-linked (GlcNAc...) asparagine glycosylation is found at N86 and N115. Catalysis depends on E147, which acts as the Proton donor. An N-linked (GlcNAc...) (complex) asparagine glycan is attached at N177. N-linked (GlcNAc...) asparagine glycosylation is present at N343. A helical membrane pass occupies residues 454-474; it reads GCSGVSPSPGSLMTLCLLLLA. Residues 475 to 481 are Cytoplasmic-facing; that stretch reads SYRSIQL.

Belongs to the glycosyl hydrolase 56 family. Detected in placenta and skeletal muscle.

It localises to the membrane. It catalyses the reaction Random hydrolysis of (1-&gt;4)-linkages between N-acetyl-beta-D-glucosamine and D-glucuronate residues in hyaluronate.. Its function is as follows. Endo-hyaluronidase that degrades hyaluronan to smaller oligosaccharide fragments. Also has chondroitin sulfate hydrolase activity, The best substrate being the galactosaminidic linkage in the sequence of a trisulfated tetrasaccharide. The sequence is that of Hyaluronidase-4 (HYAL4) from Homo sapiens (Human).